A 257-amino-acid chain; its full sequence is Gene 18 protein (257 aa).

This sequence belongs to the herpesviridae UL79 family.

The chain is Gene 18 protein (18) from Equus caballus (Horse).